Consider the following 137-residue polypeptide: uncharacterized protein (137 aa).

The protein belongs to the ycf72 family.

The protein localises to the plastid. Its subcellular location is the chloroplast. This is an uncharacterized protein from Zea mays (Maize).